A 427-amino-acid polypeptide reads, in one-letter code: 3-isopropylmalate dehydratase large subunit (427 aa).

Positions 308, 368, and 371 each coordinate [4Fe-4S] cluster.

This sequence belongs to the aconitase/IPM isomerase family. LeuC type 2 subfamily. As to quaternary structure, heterodimer of LeuC and LeuD. [4Fe-4S] cluster serves as cofactor.

The catalysed reaction is (2R,3S)-3-isopropylmalate = (2S)-2-isopropylmalate. The protein operates within amino-acid biosynthesis; L-leucine biosynthesis; L-leucine from 3-methyl-2-oxobutanoate: step 2/4. Functionally, catalyzes the isomerization between 2-isopropylmalate and 3-isopropylmalate, via the formation of 2-isopropylmaleate. The chain is 3-isopropylmalate dehydratase large subunit from Citrifermentans bemidjiense (strain ATCC BAA-1014 / DSM 16622 / JCM 12645 / Bem) (Geobacter bemidjiensis).